Reading from the N-terminus, the 132-residue chain is Photosystem II extrinsic protein U (132 aa).

A signal peptide spans 1 to 29; it reads MKRLLSWLTGALVMAGLLSSLVLPSAVYA.

This sequence belongs to the PsbU family. PSII is composed of 1 copy each of membrane proteins PsbA, PsbB, PsbC, PsbD, PsbE, PsbF, PsbH, PsbI, PsbJ, PsbK, PsbL, PsbM, PsbT, PsbX, PsbY, PsbZ, Psb30/Ycf12, peripheral proteins PsbO, CyanoQ (PsbQ), PsbU, PsbV and a large number of cofactors. It forms dimeric complexes.

It localises to the cellular thylakoid membrane. Its function is as follows. One of the extrinsic, lumenal subunits of photosystem II (PSII). PSII is a light-driven water plastoquinone oxidoreductase, using light energy to abstract electrons from H(2)O, generating a proton gradient subsequently used for ATP formation. The extrinsic proteins stabilize the structure of photosystem II oxygen-evolving complex (OEC), the ion environment of oxygen evolution and protect the OEC against heat-induced inactivation. This is Photosystem II extrinsic protein U from Synechococcus sp. (strain CC9902).